Here is a 344-residue protein sequence, read N- to C-terminus: tRNA (guanine(26)-N(2))-dimethyltransferase (344 aa).

The 334-residue stretch at 1-334 folds into the Trm1 methyltransferase domain; sequence MIVREGSAEI…ASCDLVESLM (334 aa). S-adenosyl-L-methionine-binding residues include Arg35, Arg60, and Glu76.

The protein belongs to the class I-like SAM-binding methyltransferase superfamily. Trm1 family.

It carries out the reaction guanosine(26) in tRNA + 2 S-adenosyl-L-methionine = N(2)-dimethylguanosine(26) in tRNA + 2 S-adenosyl-L-homocysteine + 2 H(+). Dimethylates a single guanine residue at position 26 of a number of tRNAs using S-adenosyl-L-methionine as donor of the methyl groups. The chain is tRNA (guanine(26)-N(2))-dimethyltransferase from Thermoplasma acidophilum (strain ATCC 25905 / DSM 1728 / JCM 9062 / NBRC 15155 / AMRC-C165).